The chain runs to 176 residues: Large ribosomal subunit protein uL6 (176 aa).

Belongs to the universal ribosomal protein uL6 family. As to quaternary structure, part of the 50S ribosomal subunit.

Functionally, this protein binds to the 23S rRNA, and is important in its secondary structure. It is located near the subunit interface in the base of the L7/L12 stalk, and near the tRNA binding site of the peptidyltransferase center. This is Large ribosomal subunit protein uL6 from Burkholderia lata (strain ATCC 17760 / DSM 23089 / LMG 22485 / NCIMB 9086 / R18194 / 383).